The sequence spans 115 residues: Yop proteins translocation protein M (115 aa).

Residues histidine 19–isoleucine 39 form a disordered region. Residues threonine 27–isoleucine 39 are compositionally biased toward polar residues.

Belongs to an operon involved in the translocation of Yop proteins across the bacterial membranes or in the specific control of this function. The polypeptide is Yop proteins translocation protein M (yscM) (Yersinia enterocolitica).